The chain runs to 389 residues: Adenylyltransferase and sulfurtransferase uba4 (389 aa).

Residues Gly40, Asp61, Ser68 to Arg72, Lys85, and Asp129 to Thr130 each bind ATP. Residues Cys171 and Cys174 each contribute to the Zn(2+) site. Residue Cys188 is the Glycyl thioester intermediate; for adenylyltransferase activity of the active site. Zn(2+) contacts are provided by Cys252 and Cys255. The Rhodanese domain occupies Ala298–Pro387. Catalysis depends on Cys347, which acts as the Cysteine persulfide intermediate.

The protein in the N-terminal section; belongs to the HesA/MoeB/ThiF family. UBA4 subfamily. The cofactor is Zn(2+).

The protein localises to the cytoplasm. The protein resides in the cytosol. The enzyme catalyses [molybdopterin-synthase sulfur-carrier protein]-C-terminal Gly-Gly + ATP + H(+) = [molybdopterin-synthase sulfur-carrier protein]-C-terminal Gly-Gly-AMP + diphosphate. The catalysed reaction is [molybdopterin-synthase sulfur-carrier protein]-C-terminal Gly-Gly-AMP + S-sulfanyl-L-cysteinyl-[cysteine desulfurase] + AH2 = [molybdopterin-synthase sulfur-carrier protein]-C-terminal-Gly-aminoethanethioate + L-cysteinyl-[cysteine desulfurase] + A + AMP + 2 H(+). The protein operates within tRNA modification; 5-methoxycarbonylmethyl-2-thiouridine-tRNA biosynthesis. It participates in cofactor biosynthesis; molybdopterin biosynthesis. In terms of biological role, plays a central role in 2-thiolation of mcm(5)S(2)U at tRNA wobble positions of cytosolic tRNA(Lys), tRNA(Glu) and tRNA(Gln). Also essential during biosynthesis of the molybdenum cofactor. Acts by mediating the C-terminal thiocarboxylation of sulfur carriers URM1 and CNX5/MOCS2A. Its N-terminus first activates urm1 and mocs2a as acyl-adenylates (-COAMP), then the persulfide sulfur on the catalytic cysteine is transferred to URM1 and CNX5/MOCS2A to form thiocarboxylation (-COSH) of their C-terminus. The reaction probably involves hydrogen sulfide that is generated from the persulfide intermediate and that acts as a nucleophile towards URM1 and CNX5/MOCS2A. Subsequently, a transient disulfide bond is formed. Does not use thiosulfate as sulfur donor; NFS1 probably acting as a sulfur donor for thiocarboxylation reactions. Required for growth on nitrate as a sole nitrogen source. The sequence is that of Adenylyltransferase and sulfurtransferase uba4 from Ogataea parapolymorpha (strain ATCC 26012 / BCRC 20466 / JCM 22074 / NRRL Y-7560 / DL-1) (Yeast).